We begin with the raw amino-acid sequence, 203 residues long: Endo-type membrane-bound lytic murein transglycosylase A (203 aa).

Residues 1–15 (MKLRWFAFLVVLLAG) form the signal peptide. The N-palmitoyl cysteine moiety is linked to residue Cys16. Residue Cys16 is the site of S-diacylglycerol cysteine attachment.

This sequence belongs to the transglycosylase Slt family.

The protein localises to the cell outer membrane. It catalyses the reaction Endolytic cleavage of the (1-&gt;4)-beta-glycosidic linkage between N-acetylmuramic acid (MurNAc) and N-acetylglucosamine (GlcNAc) residues in peptidoglycan with concomitant formation of a 1,6-anhydrobond in the MurNAc residue.. Its function is as follows. Murein-degrading enzyme. May play a role in recycling of muropeptides during cell elongation and/or cell division. Preferentially cleaves at a distance of more than two disaccharide units from the ends of the glycan chain. The chain is Endo-type membrane-bound lytic murein transglycosylase A from Escherichia fergusonii (strain ATCC 35469 / DSM 13698 / CCUG 18766 / IAM 14443 / JCM 21226 / LMG 7866 / NBRC 102419 / NCTC 12128 / CDC 0568-73).